The primary structure comprises 222 residues: 7-cyano-7-deazaguanine synthase (222 aa).

An ATP-binding site is contributed by 8–18; that stretch reads LSGGLDSATCL. Positions 187, 197, 200, and 203 each coordinate Zn(2+).

This sequence belongs to the QueC family. Zn(2+) is required as a cofactor.

It catalyses the reaction 7-carboxy-7-deazaguanine + NH4(+) + ATP = 7-cyano-7-deazaguanine + ADP + phosphate + H2O + H(+). Its pathway is purine metabolism; 7-cyano-7-deazaguanine biosynthesis. Its function is as follows. Catalyzes the ATP-dependent conversion of 7-carboxy-7-deazaguanine (CDG) to 7-cyano-7-deazaguanine (preQ(0)). The polypeptide is 7-cyano-7-deazaguanine synthase (Alcanivorax borkumensis (strain ATCC 700651 / DSM 11573 / NCIMB 13689 / SK2)).